A 466-amino-acid polypeptide reads, in one-letter code: Glycine--tRNA ligase (466 aa).

Positions 104 and 178 each coordinate substrate. Residues 210-212, 220-225, 294-295, and 338-341 contribute to the ATP site; these read RNE, FRTREF, EL, and GADR. 225–229 lines the substrate pocket; sequence FEQME. Residue 334-338 coordinates substrate; the sequence is EPSLG.

It belongs to the class-II aminoacyl-tRNA synthetase family. In terms of assembly, homodimer.

Its subcellular location is the cytoplasm. It catalyses the reaction tRNA(Gly) + glycine + ATP = glycyl-tRNA(Gly) + AMP + diphosphate. Its function is as follows. Catalyzes the attachment of glycine to tRNA(Gly). In Geobacillus thermodenitrificans (strain NG80-2), this protein is Glycine--tRNA ligase.